The sequence spans 134 residues: Large ribosomal subunit protein eL32 (134 aa).

This sequence belongs to the eukaryotic ribosomal protein eL32 family.

The polypeptide is Large ribosomal subunit protein eL32 (RpL32) (Spodoptera frugiperda (Fall armyworm)).